A 110-amino-acid chain; its full sequence is Large ribosomal subunit protein eL34 (110 aa).

The segment at 1–41 (MKNVLIHKGATYKTRSNRRRKVRTPSGKLVNRRVKKHSKKH) is disordered. Residues 30–41 (VNRRVKKHSKKH) show a composition bias toward basic residues.

This sequence belongs to the eukaryotic ribosomal protein eL34 family.

The protein is Large ribosomal subunit protein eL34 (RPL34) of Encephalitozoon cuniculi (strain GB-M1) (Microsporidian parasite).